The sequence spans 184 residues: Jacalin-related lectin 2 (184 aa).

Positions 4–163 (KIKIGPVGTD…LQNIGVYLQP (160 aa)) constitute a Jacalin-type lectin domain.

Belongs to the jacalin lectin family.

This Arabidopsis thaliana (Mouse-ear cress) protein is Jacalin-related lectin 2 (JAL2).